A 385-amino-acid polypeptide reads, in one-letter code: Alanine racemase (385 aa).

The active-site Proton acceptor; specific for D-alanine is Lys40. Lys40 carries the post-translational modification N6-(pyridoxal phosphate)lysine. Arg139 provides a ligand contact to substrate. Catalysis depends on Tyr268, which acts as the Proton acceptor; specific for L-alanine. Met315 is a substrate binding site.

The protein belongs to the alanine racemase family. Pyridoxal 5'-phosphate is required as a cofactor.

It catalyses the reaction L-alanine = D-alanine. The protein operates within amino-acid biosynthesis; D-alanine biosynthesis; D-alanine from L-alanine: step 1/1. Functionally, catalyzes the interconversion of L-alanine and D-alanine. May also act on other amino acids. This is Alanine racemase (alr) from Anoxybacillus flavithermus (strain DSM 21510 / WK1).